Reading from the N-terminus, the 1325-residue chain is Bile salt export pump (1325 aa).

At 1–62 the chain is on the cytoplasmic side; the sequence is MSDAVILRSV…FSSTTDIWLM (62 aa). The ABC transmembrane type-1 1 domain occupies 62-385; it reads MFVGSLCAFL…ASSCLEAFAT (324 aa). The helical transmembrane segment at 63–83 threads the bilayer; the sequence is FVGSLCAFLHGLSHPGVLLIF. Residues 84–147 lie on the Extracellular side of the membrane; sequence GTMTDVFIAY…MIKFASYYAG (64 aa). Residues N109, N116, N122, and N125 are each glycosylated (N-linked (GlcNAc...) asparagine). The helical transmembrane segment at 148 to 168 threads the bilayer; that stretch reads IALLVLITGYIQICFWVIAAA. Residues 169–240 are Cytoplasmic-facing; it reads RQIQKMRKIS…FLLGFYQGWK (72 aa). Residues 241-261 traverse the membrane as a helical segment; it reads LTLVIISVSPLIGIGAAIIGL. Over 262–319 the chain is Extracellular; it reads SVSKFTDYELKAYAKAGSVADEVISSMRTVAAFGGEKKEVERYEKNLVFAQRWGIRKG. Residues 320-340 traverse the membrane as a helical segment; sequence IVMGFFTGFMWCLIFLCYALA. At 341–353 the chain is on the cytoplasmic side; it reads FWYGSKLVLEDGE. Residues 354-374 traverse the membrane as a helical segment; it reads YTAGTLVQIFLSILLGALNLG. N375, N424, and N440 each carry an N-linked (GlcNAc...) asparagine glycan. Residues 375–759 are Extracellular-facing; sequence NASSCLEAFA…KFNAPEWPYM (385 aa). Positions 420–656 constitute an ABC transporter 1 domain; the sequence is IEFHNVTFHY…KGVYFTLVTL (237 aa). 455–462 lines the ATP pocket; it reads GSSGSGKS. An N-linked (GlcNAc...) asparagine glycan is attached at N591. The ABC transmembrane type-1 2 domain occupies 759–1047; sequence MLFGAVGAAV…ASSYTPSYAK (289 aa). A helical membrane pass occupies residues 760–780; it reads LFGAVGAAVNGSVTPLYAFLF. Topologically, residues 781–798 are cytoplasmic; that stretch reads SQILGTFSLPDKEEQRSQ. A helical membrane pass occupies residues 799–819; it reads INGVCLLFVAVGCVSLCTQFL. Residues 820–894 are Extracellular-facing; it reads QGYAFAKSGE…NSFTNVTVAM (75 aa). N-linked (GlcNAc...) asparagine glycosylation occurs at N889. Residues 895–915 traverse the membrane as a helical segment; the sequence is IIAFFFSWKLSLVIMCFFPFL. Residues 916-983 lie on the Cytoplasmic side of the membrane; it reads ALSGALQTRM…PFKTAFRKAN (68 aa). Residues 984-1004 form a helical membrane-spanning segment; that stretch reads VYGFCFGFSQCIVFVANSASY. Topologically, residues 1005–1014 are extracellular; that stretch reads RYGGYLIPNE. The chain crosses the membrane as a helical span at residues 1015 to 1035; it reads GLHFSYVFRVISSVVLSATAL. Topologically, residues 1036–1325 are cytoplasmic; sequence GRASSYTPSY…KLVTTGAPIS (290 aa). One can recognise an ABC transporter 2 domain in the interval 1082 to 1320; that stretch reads VDFVDCKFTY…KGAYYKLVTT (239 aa). 1117–1124 is a binding site for ATP; that stretch reads GSSGCGKS.

The protein belongs to the ABC transporter superfamily. ABCB family. Multidrug resistance exporter (TC 3.A.1.201) subfamily. Interacts with HAX1. Interacts with the adapter protein complex 2 (AP-2) throught AP2A2 or AP2A1; this interaction regulates cell membrane expression of ABCB11 through its internalization in a clathrin-dependent manner and its subsequent degradation. Post-translationally, N-glycosylated. Ubiquitinated; short-chain ubiquitination regulates cell-Surface expression of ABCB11. As to expression, liver.

Its subcellular location is the apical cell membrane. The protein resides in the recycling endosome membrane. It localises to the endosome. It is found in the cell membrane. It carries out the reaction cholate(in) + ATP + H2O = cholate(out) + ADP + phosphate + H(+). It catalyses the reaction taurocholate(in) + ATP + H2O = taurocholate(out) + ADP + phosphate + H(+). The catalysed reaction is glycocholate(in) + ATP + H2O = glycocholate(out) + ADP + phosphate + H(+). The enzyme catalyses glycochenodeoxycholate(in) + ATP + H2O = glycochenodeoxycholate(out) + ADP + phosphate + H(+). It carries out the reaction taurochenodeoxycholate(in) + ATP + H2O = taurochenodeoxycholate(out) + ADP + phosphate + H(+). It catalyses the reaction glycoursodeoxycholate(in) + ATP + H2O = glycoursodeoxycholate(out) + ADP + phosphate + H(+). The catalysed reaction is tauroursodeoxycholate(in) + ATP + H2O = tauroursodeoxycholate(out) + ADP + phosphate + H(+). The enzyme catalyses taurodeoxycholate(in) + ATP + H2O = taurodeoxycholate(out) + ADP + phosphate + H(+). It carries out the reaction taurolithocholate 3-sulfate(in) + ATP + H2O = taurolithocholate 3-sulfate(out) + ADP + phosphate + H(+). It catalyses the reaction pravastatin(in) + ATP + H2O = pravastatin(out) + ADP + phosphate + H(+). The uptake of taurocholate is inhibited by taurolithocholate sulfate with an IC(50) of 9 uM. Pravastatin competitively inhibits the transport of taurocholic acid. Cyclosporin A, glibenclamide, rifampicin and troglitazonestrongly competitively inhibit the transport activity of taurocholate. The canalicular transport activity of taurocholate is strongly dependent on canalicular membrane cholesterol content. The uptake of taurocholate is increased by short- and medium-chain fatty acids. Cholesterol increases transport capacity of taurocholate without affecting the affinity for the substrate. Functionally, catalyzes the transport of the major hydrophobic bile salts, such as taurine and glycine-conjugated cholic acid across the canalicular membrane of hepatocytes in an ATP-dependent manner, therefore participates in hepatic bile acid homeostasis and consequently to lipid homeostasis through regulation of biliary lipid secretion in a bile salts dependent manner. Transports taurine-conjugated bile salts more rapidly than glycine-conjugated bile salts. Also transports non-bile acid compounds, such as pravastatin and fexofenadine in an ATP-dependent manner and may be involved in their biliary excretion. This Canis lupus familiaris (Dog) protein is Bile salt export pump.